The sequence spans 1172 residues: DNA-directed RNA polymerase subunit beta (1172 aa).

This sequence belongs to the RNA polymerase beta chain family. The RNAP catalytic core consists of 2 alpha, 1 beta, 1 beta' and 1 omega subunit. When a sigma factor is associated with the core the holoenzyme is formed, which can initiate transcription.

It carries out the reaction RNA(n) + a ribonucleoside 5'-triphosphate = RNA(n+1) + diphosphate. In terms of biological role, DNA-dependent RNA polymerase catalyzes the transcription of DNA into RNA using the four ribonucleoside triphosphates as substrates. This Pseudothermotoga lettingae (strain ATCC BAA-301 / DSM 14385 / NBRC 107922 / TMO) (Thermotoga lettingae) protein is DNA-directed RNA polymerase subunit beta.